Here is a 68-residue protein sequence, read N- to C-terminus: ATP synthase subunit c (68 aa).

2 helical membrane passes run 4-24 (IAAAIAIGLSALGAGIGNGLI) and 45-65 (IMFIGIGLVEALPIIGVVIAF).

This sequence belongs to the ATPase C chain family. As to quaternary structure, F-type ATPases have 2 components, F(1) - the catalytic core - and F(0) - the membrane proton channel. F(1) has five subunits: alpha(3), beta(3), gamma(1), delta(1), epsilon(1). F(0) has three main subunits: a(1), b(2) and c(10-14). The alpha and beta chains form an alternating ring which encloses part of the gamma chain. F(1) is attached to F(0) by a central stalk formed by the gamma and epsilon chains, while a peripheral stalk is formed by the delta and b chains.

Its subcellular location is the cell membrane. In terms of biological role, f(1)F(0) ATP synthase produces ATP from ADP in the presence of a proton or sodium gradient. F-type ATPases consist of two structural domains, F(1) containing the extramembraneous catalytic core and F(0) containing the membrane proton channel, linked together by a central stalk and a peripheral stalk. During catalysis, ATP synthesis in the catalytic domain of F(1) is coupled via a rotary mechanism of the central stalk subunits to proton translocation. Key component of the F(0) channel; it plays a direct role in translocation across the membrane. A homomeric c-ring of between 10-14 subunits forms the central stalk rotor element with the F(1) delta and epsilon subunits. The protein is ATP synthase subunit c of Staphylococcus saprophyticus subsp. saprophyticus (strain ATCC 15305 / DSM 20229 / NCIMB 8711 / NCTC 7292 / S-41).